Consider the following 202-residue polypeptide: Solute carrier family 66 member 3 (202 aa).

A signal peptide spans 1–19 (MEAGLLWFCNWSTLGVCAA). 4 helical membrane-spanning segments follow: residues 33 to 53 (SARGISLPSLLLELAGFLVFL), 64 to 84 (LTYLEYPILIAQDIVLLLFVF), 94 to 114 (LPYMAVFVSSWFILSLQKWII), and 171 to 191 (LTILIRFVIMLALNIWVTATV).

Its subcellular location is the membrane. This is Solute carrier family 66 member 3 (Slc66a3) from Mus musculus (Mouse).